A 1265-amino-acid chain; its full sequence is Guanine nucleotide exchange factor SDC25 (1265 aa).

In terms of domain architecture, SH3 spans 26–97 (QPIDVVECTY…PPSFTRSILN (72 aa)). Disordered stretches follow at residues 409 to 454 (IPAS…DTIW) and 623 to 648 (LNLD…DEYE). Residues 416-428 (TSCSSETSHHSPS) are compositionally biased toward low complexity. An N-terminal Ras-GEF domain is found at 782 to 914 (SNNRIKGGSK…LLKEVNQKFK (133 aa)). The 248-residue stretch at 952–1199 (DPVLFATQLT…YQLSLIIEPK (248 aa)) folds into the Ras-GEF domain. The disordered stretch occupies residues 1201-1252 (RKKVVPNSNSNNKSQEKSRDDQTDEGKTSTKKDRFSKFQLHKTKKKAPKVSK). The segment covering 1214 to 1236 (SQEKSRDDQTDEGKTSTKKDRFS) has biased composition (basic and acidic residues). Basic residues predominate over residues 1239-1252 (QLHKTKKKAPKVSK).

Promotes the exchange of Ras-bound GDP by GTP. The chain is Guanine nucleotide exchange factor SDC25 (SDC25) from Saccharomyces cerevisiae (strain AWRI1631) (Baker's yeast).